A 160-amino-acid polypeptide reads, in one-letter code: C-type lectin mosGCTL-1 (160 aa).

An N-terminal signal peptide occupies residues 1-20; the sequence is MLTKGITLILLLVLVHSSHG. Positions 23-140 constitute a C-type lectin domain; that stretch reads TPNRKFYIPS…YHWSWNDNTC (118 aa). 2 disulfides stabilise this stretch: cysteine 44-cysteine 140 and cysteine 120-cysteine 140. N-linked (GlcNAc...) asparagine glycosylation is present at asparagine 76.

As to quaternary structure, interacts with putative receptor-type tyrosine-protein phosphatase mosPTP-1; the interaction probably mediates the recruitment of West Nile virus particles in complex with C-type lectin mosGCTL-1 to the cell surface. (Microbial infection) Interacts with envelope protein E and virions of West Nile virus in a calcium-dependent manner. As to expression, female salivary gland (at protein level).

It is found in the secreted. Putative lectin. In terms of biological role, (Microbial infection) Facilitates West Nile virus infection in mosquitoes probably via capturing viral particles and presenting them to a ligand on the cell surface, thereby facilitating viral entry. The chain is C-type lectin mosGCTL-1 from Aedes aegypti (Yellowfever mosquito).